A 301-amino-acid chain; its full sequence is N-acetylmuramic acid 6-phosphate etherase (301 aa).

Residues Thr59–Lys222 form the SIS domain. The active-site Proton donor is Glu87. Glu118 is an active-site residue.

Belongs to the GCKR-like family. MurNAc-6-P etherase subfamily. Homodimer.

It catalyses the reaction N-acetyl-D-muramate 6-phosphate + H2O = N-acetyl-D-glucosamine 6-phosphate + (R)-lactate. It participates in amino-sugar metabolism; N-acetylmuramate degradation. Its function is as follows. Specifically catalyzes the cleavage of the D-lactyl ether substituent of MurNAc 6-phosphate, producing GlcNAc 6-phosphate and D-lactate. In Picosynechococcus sp. (strain ATCC 27264 / PCC 7002 / PR-6) (Agmenellum quadruplicatum), this protein is N-acetylmuramic acid 6-phosphate etherase.